Here is a 363-residue protein sequence, read N- to C-terminus: MAQSSLRLVENPTMDKDKSKAIDAALAQIERAFGKGSIMRLGKGDKVQEVETISTGSLGLDVALGVGGLPRGRVIEIYGPESSGKTTLALHTIAEAQKKGGVCAFVDAEHALDPVYARKLGVNLDDLLISQPDTGEQALEITDTLVRSGAIDVLVVDSVAALTPRAEIEGEMGDQQPGLQARLMSQALRKLTGSISRSNCMVIFINQIRMKIGVMYGSPETTTGGNALKFYASVRLDIRRVSTLKDRDEPIGNSVRVKVVKNKVAPPFKQVEFDIMFGEGVSKVGELIDLGVKAGIVEKSGAWFSYDSQRLGQGRENAKGFLRDNPDIAGRIEAAIRQNMGLVADKILENAVPTAEDFDEGEA.

Residue 79–86 (GPESSGKT) participates in ATP binding.

This sequence belongs to the RecA family.

The protein resides in the cytoplasm. Its function is as follows. Can catalyze the hydrolysis of ATP in the presence of single-stranded DNA, the ATP-dependent uptake of single-stranded DNA by duplex DNA, and the ATP-dependent hybridization of homologous single-stranded DNAs. It interacts with LexA causing its activation and leading to its autocatalytic cleavage. The sequence is that of Protein RecA from Methylobacterium sp. (strain 4-46).